The sequence spans 145 residues: Angiogenin-3 (145 aa).

Residues 1–24 (MVMSPGSLLLVFLLSLDVIPPTLA) form the signal peptide. Gln25 bears the Pyrrolidone carboxylic acid mark. His37 serves as the catalytic Proton acceptor. 3 cysteine pairs are disulfide-bonded: Cys50/Cys104, Cys63/Cys115, and Cys81/Cys130. The Nucleolar localization signal signature appears at 55–59 (KKRKL). Zn(2+)-binding residues include Glu65 and His106. The active-site Proton donor is the His137.

The protein belongs to the pancreatic ribonuclease family.

The protein resides in the cytoplasmic vesicle. Its subcellular location is the secretory vesicle lumen. It is found in the secreted. The protein localises to the nucleus. It localises to the nucleolus. Its activity is regulated as follows. Divalent metal ions, such as Cu2+ and Zn2+, may inhibit the ribonucleolytic activity. Has low ribonuclease activity (in vitro). The protein is Angiogenin-3 (Ang3) of Mus musculus (Mouse).